The chain runs to 68 residues: Large ribosomal subunit protein bL35 (68 aa).

Basic residues-rich tracts occupy residues 1–11 (MPKLKTRSSAK) and 19–29 (SGKVKHGKAFA). A disordered region spans residues 1–54 (MPKLKTRSSAKKRFDVKKSGKVKHGKAFAKHLFTFSKTPKSKRSNRGTGHLRDM).

This sequence belongs to the bacterial ribosomal protein bL35 family.

This Myxococcus xanthus (strain DK1622) protein is Large ribosomal subunit protein bL35.